A 308-amino-acid chain; its full sequence is Quinolinate synthase (308 aa).

Residues His-24 and Ser-41 each coordinate iminosuccinate. Cys-86 is a [4Fe-4S] cluster binding site. Iminosuccinate-binding positions include 112–114 (YIN) and Ser-129. Cys-172 contributes to the [4Fe-4S] cluster binding site. Residues 198-200 (HPE) and Thr-215 each bind iminosuccinate. Cys-265 is a binding site for [4Fe-4S] cluster.

Belongs to the quinolinate synthase family. Type 2 subfamily. [4Fe-4S] cluster serves as cofactor.

Its subcellular location is the cytoplasm. The enzyme catalyses iminosuccinate + dihydroxyacetone phosphate = quinolinate + phosphate + 2 H2O + H(+). It functions in the pathway cofactor biosynthesis; NAD(+) biosynthesis; quinolinate from iminoaspartate: step 1/1. Functionally, catalyzes the condensation of iminoaspartate with dihydroxyacetone phosphate to form quinolinate. The sequence is that of Quinolinate synthase from Sulfurihydrogenibium sp. (strain YO3AOP1).